The sequence spans 33 residues: Protamine TP14 (33 aa).

Residues 1–33 (MPRRRRSSRPPVRRRRRPRVSRRRRRRGGRRRR) are disordered.

In terms of tissue distribution, testis.

It is found in the nucleus. The protein resides in the chromosome. In terms of biological role, protamines substitute for histones in the chromatin of sperm during the haploid phase of spermatogenesis. They compact sperm DNA into a highly condensed, stable and inactive complex. The polypeptide is Protamine TP14 (Oncorhynchus mykiss (Rainbow trout)).